Reading from the N-terminus, the 105-residue chain is Met repressor (105 aa).

The protein belongs to the MetJ family. Homodimer.

The protein resides in the cytoplasm. Functionally, this regulatory protein, when combined with SAM (S-adenosylmethionine) represses the expression of the methionine regulon and of enzymes involved in SAM synthesis. The polypeptide is Met repressor (Shigella boydii serotype 18 (strain CDC 3083-94 / BS512)).